A 269-amino-acid polypeptide reads, in one-letter code: Regulating synaptic membrane exocytosis protein 4 (269 aa).

Residues Pro-115 to Tyr-233 enclose the C2 domain. A phosphoserine mark is found at Ser-254 and Ser-257.

Binds PPFIA3. Does not bind RAB3.

It localises to the synapse. Its function is as follows. Regulates synaptic membrane exocytosis. The chain is Regulating synaptic membrane exocytosis protein 4 (Rims4) from Mus musculus (Mouse).